A 150-amino-acid chain; its full sequence is Arginine repressor (150 aa).

It belongs to the ArgR family.

The protein resides in the cytoplasm. It functions in the pathway amino-acid biosynthesis; L-arginine biosynthesis [regulation]. Functionally, regulates arginine biosynthesis genes. The chain is Arginine repressor from Desulfitobacterium hafniense (strain DSM 10664 / DCB-2).